Here is a 341-residue protein sequence, read N- to C-terminus: Biotin synthase (341 aa).

One can recognise a Radical SAM core domain in the interval 40 to 264 (NSVKLNYLVN…VAPRSELRIA (225 aa)). [4Fe-4S] cluster contacts are provided by C55, C59, and C62. [2Fe-2S] cluster is bound by residues C99, C132, C192, and R262. The tract at residues 317 to 341 (ASAPQGGVEPVLRKRGAGTELQPNA) is disordered.

The protein belongs to the radical SAM superfamily. Biotin synthase family. In terms of assembly, homodimer. Requires [4Fe-4S] cluster as cofactor. [2Fe-2S] cluster is required as a cofactor.

It catalyses the reaction (4R,5S)-dethiobiotin + (sulfur carrier)-SH + 2 reduced [2Fe-2S]-[ferredoxin] + 2 S-adenosyl-L-methionine = (sulfur carrier)-H + biotin + 2 5'-deoxyadenosine + 2 L-methionine + 2 oxidized [2Fe-2S]-[ferredoxin]. Its pathway is cofactor biosynthesis; biotin biosynthesis; biotin from 7,8-diaminononanoate: step 2/2. In terms of biological role, catalyzes the conversion of dethiobiotin (DTB) to biotin by the insertion of a sulfur atom into dethiobiotin via a radical-based mechanism. This chain is Biotin synthase, found in Renibacterium salmoninarum (strain ATCC 33209 / DSM 20767 / JCM 11484 / NBRC 15589 / NCIMB 2235).